Here is a 412-residue protein sequence, read N- to C-terminus: Serine hydroxymethyltransferase (412 aa).

Residues Leu117 and 121–123 (GHL) each bind (6S)-5,6,7,8-tetrahydrofolate. Lys226 is subject to N6-(pyridoxal phosphate)lysine. Position 349-351 (349-351 (SPF)) interacts with (6S)-5,6,7,8-tetrahydrofolate.

This sequence belongs to the SHMT family. As to quaternary structure, homodimer. Pyridoxal 5'-phosphate serves as cofactor.

It localises to the cytoplasm. The enzyme catalyses (6R)-5,10-methylene-5,6,7,8-tetrahydrofolate + glycine + H2O = (6S)-5,6,7,8-tetrahydrofolate + L-serine. Its pathway is one-carbon metabolism; tetrahydrofolate interconversion. It participates in amino-acid biosynthesis; glycine biosynthesis; glycine from L-serine: step 1/1. Catalyzes the reversible interconversion of serine and glycine with tetrahydrofolate (THF) serving as the one-carbon carrier. This reaction serves as the major source of one-carbon groups required for the biosynthesis of purines, thymidylate, methionine, and other important biomolecules. Also exhibits THF-independent aldolase activity toward beta-hydroxyamino acids, producing glycine and aldehydes, via a retro-aldol mechanism. The chain is Serine hydroxymethyltransferase from Lawsonia intracellularis (strain PHE/MN1-00).